The chain runs to 148 residues: Snaclec 8 (148 aa).

Positions 1-23 (MGRFIFVSFSLLVVFFSLSGTEA) are cleaved as a signal peptide. A C-type lectin domain is found at 34–148 (YDQNCYKAFE…DTQFRLQEPG (115 aa)).

This sequence belongs to the snaclec family. Heterodimer; disulfide-linked. Post-translationally, contains disulfide bonds. In terms of tissue distribution, expressed by the venom gland.

Its subcellular location is the secreted. Interferes with one step of hemostasis (modulation of platelet aggregation, or coagulation cascade, for example). This chain is Snaclec 8, found in Echis carinatus sochureki (Saw-scaled viper).